Consider the following 204-residue polypeptide: Thymidylate kinase (204 aa).

11 to 18 contributes to the ATP binding site; sequence GLDKSGKT.

This sequence belongs to the thymidylate kinase family.

It catalyses the reaction dTMP + ATP = dTDP + ADP. The protein operates within pyrimidine metabolism; dTTP biosynthesis. This Rabbitpox virus (strain Utrecht) (RPV) protein is Thymidylate kinase (TMK).